A 552-amino-acid chain; its full sequence is Beta-hexosaminidase A (552 aa).

A signal peptide spans M1–A15. The N-linked (GlcNAc...) asparagine glycan is linked to N44. The Proton donor role is filled by E322. N-linked (GlcNAc...) asparagine glycosylation is found at N348, N409, and N457.

This sequence belongs to the glycosyl hydrolase 20 family.

It localises to the lysosome. It catalyses the reaction Hydrolysis of terminal non-reducing N-acetyl-D-hexosamine residues in N-acetyl-beta-D-hexosaminides.. Functionally, responsible for the degradation of GM2 gangliosides, and a variety of other molecules containing terminal N-acetyl hexosamines. Degrades chitotriose. This is Beta-hexosaminidase A from Caenorhabditis briggsae.